A 207-amino-acid chain; its full sequence is MIOREX complex component 11 (207 aa).

The transit peptide at 1 to 46 (MTVMNLFFRPCQLQMGSGPLELMLKRPTQLTTFMNTRPGGSTQIRF) directs the protein to the mitochondrion. Topologically, residues 47-98 (ISGNLDPVKRREDRLRKIFSKSRLLTRLNKNPKFSHYFDRLSEAGTVPTLTS) are mitochondrial matrix. A helical transmembrane segment spans residues 99–119 (FFILHEVTAILPLFLLWWLLY). Topologically, residues 120-177 (NLDLSDDFKLPNFLNGLMDSCHTAMEKFVGKRYQECLNKNKLILSGTVAYVTVKLLYP) are mitochondrial intermembrane. The helical transmembrane segment at 178-198 (VRIFISIWGAPYFGKWLLLPF) threads the bilayer. Residues 199 to 207 (QKLKHLIKK) lie on the Mitochondrial matrix side of the membrane.

Belongs to the MRX11 family. In terms of assembly, associates with the mitochondrial ribosome.

It localises to the mitochondrion. The protein localises to the mitochondrion inner membrane. Functionally, component of MIOREX complexes, large expressome-like assemblies of ribosomes with factors involved in all the steps of post-transcriptional gene expression. The sequence is that of MIOREX complex component 11 from Saccharomyces cerevisiae (strain ATCC 204508 / S288c) (Baker's yeast).